Here is a 552-residue protein sequence, read N- to C-terminus: 5'-AMP-activated protein kinase catalytic subunit alpha-2 (552 aa).

Residues 16–268 (YVLGDTLGVG…IKDIREHEWF (253 aa)) form the Protein kinase domain. Residues 22 to 30 (LGVGTFGKV) and Lys-45 contribute to the ATP site. Residue Asp-139 is the Proton acceptor of the active site. Phosphothreonine; by LKB1 and CaMKK2 is present on Thr-172. Thr-258 bears the Phosphothreonine mark. The segment at 291-376 (EAVKEVCEKF…PERMPPLIAD (86 aa)) is AIS. Ser-377 carries the post-translational modification Phosphoserine. The tract at residues 478 to 519 (EQRSGSSTPQRSCSAAGLHRPRSSLDSVTAESHSLSGSLSGS) is disordered. Over residues 480-490 (RSGSSTPQRSC) the composition is skewed to polar residues. Ser-491 is modified (phosphoserine). Low complexity predominate over residues 509-519 (SHSLSGSLSGS).

The protein belongs to the protein kinase superfamily. CAMK Ser/Thr protein kinase family. SNF1 subfamily. AMPK is a heterotrimer of an alpha catalytic subunit (PRKAA1 or PRKAA2), a beta (PRKAB1 or PRKAB2) and a gamma non-catalytic subunits (PRKAG1, PRKAG2 or PRKAG3). Interacts with FNIP1 and FNIP2. Interacts with DUSP29. Interacts with ARF6. The phosphorylated form at Thr-172 mediated by CamKK2 interacts with ACSS2. It depends on Mg(2+) as a cofactor. Post-translationally, ubiquitinated. In terms of processing, phosphorylated at Thr-172 by STK11/LKB1 in complex with STE20-related adapter-alpha (STRADA) pseudo kinase and CAB39. Also phosphorylated at Thr-172 by CAMKK2; triggered by a rise in intracellular calcium ions, without detectable changes in the AMP/ATP ratio. CAMKK1 can also phosphorylate Thr-172, but at much lower level. Dephosphorylated by protein phosphatase 2A and 2C (PP2A and PP2C). Phosphorylated by ULK1; leading to negatively regulate AMPK activity and suggesting the existence of a regulatory feedback loop between ULK1 and AMPK. Dephosphorylated by PPM1A and PPM1B at Thr-172 (mediated by STK11/LKB1).

Its subcellular location is the cytoplasm. The protein resides in the nucleus. The catalysed reaction is L-seryl-[protein] + ATP = O-phospho-L-seryl-[protein] + ADP + H(+). The enzyme catalyses L-threonyl-[protein] + ATP = O-phospho-L-threonyl-[protein] + ADP + H(+). It catalyses the reaction L-seryl-[acetyl-CoA carboxylase] + ATP = O-phospho-L-seryl-[acetyl-CoA carboxylase] + ADP + H(+). It carries out the reaction L-seryl-[3-hydroxy-3-methylglutaryl-coenzyme A reductase] + ATP = O-phospho-L-seryl-[3-hydroxy-3-methylglutaryl-coenzyme A reductase] + ADP + H(+). Its activity is regulated as follows. Activated by phosphorylation on Thr-172. Binding of AMP to non-catalytic gamma subunit (PRKAG1, PRKAG2 or PRKAG3) results in allosteric activation, inducing phosphorylation on Thr-172. AMP-binding to gamma subunit also sustains activity by preventing dephosphorylation of Thr-172. ADP also stimulates Thr-172 phosphorylation, without stimulating already phosphorylated AMPK. ATP promotes dephosphorylation of Thr-172, rendering the enzyme inactive. Under physiological conditions AMPK mainly exists in its inactive form in complex with ATP, which is much more abundant than AMP. Selectively inhibited by compound C (6-[4-(2-Piperidin-1-yl-ethoxy)-phenyl)]-3-pyridin-4-yl-pyyrazolo[1,5-a] pyrimidine. Activated by resveratrol, a natural polyphenol present in red wine, and S17834, a synthetic polyphenol. Salicylate/aspirin directly activates kinase activity, primarily by inhibiting Thr-172 dephosphorylation. Catalytic subunit of AMP-activated protein kinase (AMPK), an energy sensor protein kinase that plays a key role in regulating cellular energy metabolism. In response to reduction of intracellular ATP levels, AMPK activates energy-producing pathways and inhibits energy-consuming processes: inhibits protein, carbohydrate and lipid biosynthesis, as well as cell growth and proliferation. AMPK acts via direct phosphorylation of metabolic enzymes, and by longer-term effects via phosphorylation of transcription regulators. Regulates lipid synthesis by phosphorylating and inactivating lipid metabolic enzymes such as ACACA, ACACB, GYS1, HMGCR and LIPE; regulates fatty acid and cholesterol synthesis by phosphorylating acetyl-CoA carboxylase (ACACA and ACACB) and hormone-sensitive lipase (LIPE) enzymes, respectively. Promotes lipolysis of lipid droplets by mediating phosphorylation of isoform 1 of CHKA (CHKalpha2). Regulates insulin-signaling and glycolysis by phosphorylating IRS1, PFKFB2 and PFKFB3. Involved in insulin receptor/INSR internalization. AMPK stimulates glucose uptake in muscle by increasing the translocation of the glucose transporter SLC2A4/GLUT4 to the plasma membrane, possibly by mediating phosphorylation of TBC1D4/AS160. Regulates transcription and chromatin structure by phosphorylating transcription regulators involved in energy metabolism such as CRTC2/TORC2, FOXO3, histone H2B, HDAC5, MEF2C, MLXIPL/ChREBP, EP300, HNF4A, p53/TP53, SREBF1, SREBF2 and PPARGC1A. Acts as a key regulator of glucose homeostasis in liver by phosphorylating CRTC2/TORC2, leading to CRTC2/TORC2 sequestration in the cytoplasm. In response to stress, phosphorylates 'Ser-36' of histone H2B (H2BS36ph), leading to promote transcription. Acts as a key regulator of cell growth and proliferation by phosphorylating FNIP1, TSC2, RPTOR, WDR24 and ATG1/ULK1: in response to nutrient limitation, negatively regulates the mTORC1 complex by phosphorylating RPTOR component of the mTORC1 complex and by phosphorylating and activating TSC2. Also phosphorylates and inhibits GATOR2 subunit WDR24 in response to nutrient limitation, leading to suppress glucose-mediated mTORC1 activation. In response to energetic stress, phosphorylates FNIP1, inactivating the non-canonical mTORC1 signaling, thereby promoting nuclear translocation of TFEB and TFE3, and inducing transcription of lysosomal or autophagy genes. In response to nutrient limitation, promotes autophagy by phosphorylating and activating ATG1/ULK1. In that process also activates WDR45/WIPI4. Phosphorylates CASP6, thereby preventing its autoprocessing and subsequent activation. AMPK also acts as a regulator of circadian rhythm by mediating phosphorylation of CRY1, leading to destabilize it. May regulate the Wnt signaling pathway by phosphorylating CTNNB1, leading to stabilize it. Also acts as a regulator of cellular polarity by remodeling the actin cytoskeleton; probably by indirectly activating myosin. Also phosphorylates CFTR, EEF2K, KLC1, NOS3 and SLC12A1. Plays an important role in the differential regulation of pro-autophagy (composed of PIK3C3, BECN1, PIK3R4 and UVRAG or ATG14) and non-autophagy (composed of PIK3C3, BECN1 and PIK3R4) complexes, in response to glucose starvation. Can inhibit the non-autophagy complex by phosphorylating PIK3C3 and can activate the pro-autophagy complex by phosphorylating BECN1. Upon glucose starvation, promotes ARF6 activation in a kinase-independent manner leading to cell migration. Upon glucose deprivation mediates the phosphorylation of ACSS2 at 'Ser-659', which exposes the nuclear localization signal of ACSS2, required for its interaction with KPNA1 and nuclear translocation. Upon stress, regulates mitochondrial fragmentation through phosphorylation of MTFR1L. This chain is 5'-AMP-activated protein kinase catalytic subunit alpha-2 (PRKAA2), found in Sus scrofa (Pig).